The primary structure comprises 25 residues: Non-specific lipid-transfer protein 3 (25 aa).

As to expression, seeds (at protein level).

Its function is as follows. Plant non-specific lipid-transfer proteins transfer phospholipids as well as galactolipids across membranes. May play a role in wax or cutin deposition in the cell walls of expanding epidermal cells and certain secretory tissues. Has antibacterial and antifungal activity. Displays antibacterial activity towards both Gram-negative bacteria, P.carotovorum (IC(50)=11.5 uM) and P.syringae (IC(50)=12.0 uM), and Gram-positive bacterium C.michiganensis subsp michiganense (IC(50)=11.2 uM). Also displays antifungal activity towards A.niger VKM F-33 (IC(50)=1.05 uM) and B.cinerea TSKHA (IC(50)=1.88 uM) and relatively moderate activity towards B.sorokiniana VKM F-1448 (IC(50)=1.55 uM). Displays some inhibitory activity towards P.infestans OSV12. This Nigella sativa (Black cumin) protein is Non-specific lipid-transfer protein 3.